A 409-amino-acid polypeptide reads, in one-letter code: Alpha-1-antitrypsin (409 aa).

The first 15 residues, 1 to 15, serve as a signal peptide directing secretion; that stretch reads LLLAGLCCLLPGSLA. Residues 18–39 are disordered; the sequence is PQGDAAQKTDTPPHDQNHPTLN. Residues N61, N98, N136, and N262 are each glycosylated (N-linked (GlcNAc...) asparagine). Residues 364-383 are RCL; sequence GAMFLEAIPMSIPPEVKFNK. At S374 the chain carries Phosphoserine.

The protein belongs to the serpin family. In terms of assembly, interacts with CELA2A. Interacts with ERGIC3 and LMAN1/ERGIC53. Interacts with PRSS1/Trypsin. As to expression, plasma.

The protein resides in the secreted. Its function is as follows. Inhibitor of serine proteases. Its primary target is elastase, but it also has a moderate affinity for plasmin and thrombin. Inhibits trypsin, chymotrypsin and plasminogen activator. The sequence is that of Alpha-1-antitrypsin (SERPINA1) from Papio anubis (Olive baboon).